We begin with the raw amino-acid sequence, 418 residues long: Hydroxysteroid dehydrogenase-like protein 2 (418 aa).

NADP(+) is bound by residues 17–23 (GASRGIG), K42, and D74. K42 bears the N6-(2-hydroxyisobutyryl)lysine mark. K116 is subject to N6-acetyllysine. Y168 (proton acceptor) is an active-site residue. K172 serves as a coordination point for NADP(+). The region spanning 306–415 (RSGAVEETFR…KLEKLMNQMN (110 aa)) is the SCP2 domain. K318 carries the post-translational modification N6-succinyllysine.

Belongs to the short-chain dehydrogenases/reductases (SDR) family. In terms of tissue distribution, ubiquitous.

The protein resides in the peroxisome. Its subcellular location is the mitochondrion. Its function is as follows. Has apparently no steroid dehydrogenase activity. Controls bile acid (BA) and lipid metabolism in response to nutritional cues. This chain is Hydroxysteroid dehydrogenase-like protein 2, found in Homo sapiens (Human).